The chain runs to 108 residues: Resistin (108 aa).

Residues 1–18 form the signal peptide; sequence MKALCLLLLPVLGLLVSS. 5 disulfide bridges follow: C51–C104, C63–C103, C72–C89, C74–C91, and C78–C93.

It belongs to the resistin/FIZZ family. Homodimer; disulfide-linked. Interacts with DEFA1. Expressed in white adipose tissue (at protein level). Widely expressed, with particularly strong expression in lung, bone marrow, breast and peripheral blood. Expressed strongly in bone marrow and at lower levels in lung, but not detected in other tissues. Isoform 2 is detected in adipose tissue, bone marrow, brain, lung, peripheral blood, placenta and thymus.

The protein localises to the secreted. Functionally, hormone that seems to suppress insulin ability to stimulate glucose uptake into adipose cells. Potentially links obesity to diabetes. Promotes chemotaxis in myeloid cells. This chain is Resistin (RETN), found in Homo sapiens (Human).